The following is a 742-amino-acid chain: Zinc finger MYND domain-containing protein 15 (742 aa).

Residues 109 to 199 (LEDGEEGEEE…QKRKGQRSEA (91 aa)) are disordered. The span at 110 to 127 (EDGEEGEEEEEEDEEEEK) shows a compositional bias: acidic residues. A compositionally biased stretch (polar residues) spans 151–161 (SRESPQETNPP). Residues 166-189 (EAAREAGGGKDGCREDRVENETRP) are compositionally biased toward basic and acidic residues. Zn(2+)-binding residues include cysteine 313, cysteine 316, cysteine 328, cysteine 331, cysteine 337, cysteine 341, histidine 355, and cysteine 359. Residues 313–359 (CHVCHRHSFEAKLTPCPQCSAVLYCGEACLRADWQRCPDDVSHRFWC) form an MYND-type zinc finger. 2 disordered regions span residues 565 to 590 (EVSV…GRRD) and 701 to 742 (QGSG…RRRK). The segment covering 708–724 (APGPPPPSPTPSAPPAP) has biased composition (pro residues). Basic residues predominate over residues 725–742 (TRRRRGEKKPGRGARRRK).

As to quaternary structure, interacts with HDAC1, HDAC3, HDAC6 and, to a lesser extent, with HDAC7.

Its subcellular location is the nucleus. The protein localises to the cytoplasm. Acts as a transcriptional repressor through interaction with histone deacetylases (HDACs). May be important for spermiogenesis. In Homo sapiens (Human), this protein is Zinc finger MYND domain-containing protein 15 (ZMYND15).